A 300-amino-acid chain; its full sequence is Protease HtpX homolog (300 aa).

The next 2 membrane-spanning stretches (helical) occupy residues 5 to 25 (IFLL…FISL) and 41 to 61 (TLFL…LAIS). His146 lines the Zn(2+) pocket. Glu147 is a catalytic residue. His150 is a binding site for Zn(2+). 2 helical membrane-spanning segments follow: residues 161–181 (LLQG…GFFV) and 196–216 (IGFY…ASII). Glu225 is a Zn(2+) binding site.

This sequence belongs to the peptidase M48B family. Zn(2+) serves as cofactor.

It is found in the cell inner membrane. In Methylacidiphilum infernorum (isolate V4) (Methylokorus infernorum (strain V4)), this protein is Protease HtpX homolog.